The sequence spans 401 residues: MAKQKFERTKPHINVGTIGHVDHGKTTLTAAITKVLSLKGAAQFMAYDQIDNAPEERARGITIAIRHVEYQTDKRHYAHVDCPGHADYIKNMITGAAQMDGAILVVSAPDGPMPQTREHILLARQVQVPAIVVFLNKVDMMDDPELLELVELELRELLSKYGFPGDEIPIVRGSARNALESPSKDINAPEYKCILELMNAVDEYIPTPQRAVDQPFLMPIEDVFGIKGRGTVVTGRIERGKVKVGDTVEIVGMTNDAPRRTVVTGVEMFQKTLDEGIAGDNVGCLLRGIERTDVERGQVLCAPGSIKPHKKFEAQVYVLKKEEGGRHTPFFSGYRPQFYIRTTDVTGAIGLPAGMEMVMPGDNVVMTIELIVPVAIEEGLRFAIREGGRTVGAGVVTKILD.

Residues 10–209 (KPHINVGTIG…AVDEYIPTPQ (200 aa)) enclose the tr-type G domain. The segment at 19–26 (GHVDHGKT) is G1. 19-26 (GHVDHGKT) is a binding site for GTP. Thr26 serves as a coordination point for Mg(2+). The interval 60 to 64 (GITIA) is G2. The segment at 81 to 84 (DCPG) is G3. GTP contacts are provided by residues 81-85 (DCPGH) and 136-139 (NKVD). The interval 136–139 (NKVD) is G4. The segment at 174-176 (SAR) is G5.

It belongs to the TRAFAC class translation factor GTPase superfamily. Classic translation factor GTPase family. EF-Tu/EF-1A subfamily. Monomer.

The protein resides in the cytoplasm. It catalyses the reaction GTP + H2O = GDP + phosphate + H(+). In terms of biological role, GTP hydrolase that promotes the GTP-dependent binding of aminoacyl-tRNA to the A-site of ribosomes during protein biosynthesis. The polypeptide is Elongation factor Tu (Chloroflexus aurantiacus (strain ATCC 29366 / DSM 635 / J-10-fl)).